Here is an 840-residue protein sequence, read N- to C-terminus: E3 ubiquitin-protein ligase SH3RF1 (840 aa).

The segment at 12–53 (CPVCLERLDASAKVLPCQHTFCKRCLLGIVGSRNELRCPECR) adopts an RING-type zinc-finger fold. Residues 105–129 (VTCSPKDGPSSQGGPQPRAQAWSPP) are disordered. 2 consecutive SH3 domains span residues 134 to 193 (PQLP…IIKP) and 196 to 259 (QPPP…FNSA). Disordered stretches follow at residues 267-324 (DQPP…RHSM), 394-442 (TLNP…PRPS), 516-545 (GPAS…VAGG), 578-633 (QARS…AASG), 652-723 (AASL…LGAE), and 744-773 (MAPG…SLGP). Residues 273-282 (GVAAGEGALA) show a composition bias toward low complexity. Residues 283 to 292 (TTPSSTTTKQ) show a composition bias toward polar residues. The segment at 292–362 (QPDGKKNTKK…APSQVHISTT (71 aa)) is interaction with RAC1. Residue Ser-304 is modified to Phosphoserine. 2 stretches are compositionally biased toward low complexity: residues 307 to 320 (SLSM…AAQQ) and 405 to 424 (QAAT…GPRP). Residues 434–537 (HPRPQPRPSV…PSTGGPAQKP (104 aa)) are interaction with AKT2. The SH3 3 domain maps to 439–500 (PRPSVYVAIY…PGNYVAPVTR (62 aa)). The segment covering 616-625 (SPQPPAPLGP) has biased composition (pro residues). Basic and acidic residues predominate over residues 681-692 (RPDKDGKKEKKG). Ser-709 is subject to Phosphoserine. The SH3 4 domain maps to 781-840 (AVCERHRVVVSYPPQSEAELELKEGDIVFVHKKREDGWFKGTLQRNGKTGLFPGSFVENI).

This sequence belongs to the SH3RF family. Interacts with RAC1; in a GTP-dependent manner. Interacts with MAP3K10/MLK2 and MAP3K11/MLK3. Interacts with MAPK8IP; this interaction leads to the PJAC complex (POSH-JIP or SH3RF1/MAPK8IP apoptotic complex) with a 1:1 ratio. Interacts with SIAH1. Interacts with HERP1. Probably part of a signaling complex that may contain SH3RF1, MAPK8IP, DLK1, MAP2K4/MKK4, MAP2K7/MKK7, MAPK8/JNK1, MAPK9/JNK2, AKT1 and AKT2. Found in a complex with RAC2, MAP3K7/TAK1, MAP2K7/MKK7, MAPK8IP1/JIP1, MAPK8/JNK1 and MAPK9/JNK2. Found in a complex with RAC1, MAP3K11/MLK3, MAP2K7/MKK7, MAPK8IP1/JIP1 and MAPK8/JNK1. Interacts with SH3RF2. Post-translationally, phosphorylated at Ser-304 by AKT1 and AKT2. When phosphorylated, it has reduced ability to bind Rac. Autoubiquitinated. Ubiquitinated by SH3RF2, leading to proteasome-mediated degradation.

It is found in the cytoplasm. The protein localises to the perinuclear region. It localises to the cell projection. The protein resides in the lamellipodium. Its subcellular location is the golgi apparatus. It is found in the trans-Golgi network. It carries out the reaction S-ubiquitinyl-[E2 ubiquitin-conjugating enzyme]-L-cysteine + [acceptor protein]-L-lysine = [E2 ubiquitin-conjugating enzyme]-L-cysteine + N(6)-ubiquitinyl-[acceptor protein]-L-lysine.. The protein operates within protein modification; protein ubiquitination. Functionally, has E3 ubiquitin-protein ligase activity. In the absence of an external substrate, it can catalyze self-ubiquitination. Stimulates ubiquitination of potassium channel KCNJ1, enhancing it's dynamin-dependent and clathrin-independent endocytosis. Acts as a scaffold protein that coordinates with MAPK8IP1/JIP1 in organizing different components of the JNK pathway, including RAC1 or RAC2, MAP3K11/MLK3 or MAP3K7/TAK1, MAP2K7/MKK7, MAPK8/JNK1 and/or MAPK9/JNK2 into a functional multiprotein complex to ensure the effective activation of the JNK signaling pathway. Regulates the differentiation of CD4(+) and CD8(+) T-cells and promotes T-helper 1 (Th1) cell differentiation. Regulates the activation of MAPK8/JNK1 and MAPK9/JNK2 in CD4(+) T-cells and the activation of MAPK8/JNK1 in CD8(+) T-cells. Plays a crucial role in the migration of neocortical neurons in the developing brain. Controls proper cortical neuronal migration and the formation of proximal cytoplasmic dilation in the leading process (PCDLP) in migratory neocortical neurons by regulating the proper localization of activated RAC1 and F-actin assembly. The chain is E3 ubiquitin-protein ligase SH3RF1 (SH3RF1) from Bos taurus (Bovine).